The primary structure comprises 188 residues: UPF0301 protein azo3459 (188 aa).

Belongs to the UPF0301 (AlgH) family.

The chain is UPF0301 protein azo3459 from Azoarcus sp. (strain BH72).